A 325-amino-acid chain; its full sequence is Histone-lysine N-methyltransferase ATXR4 (325 aa).

The first 30 residues, 1–30, serve as a signal peptide directing secretion; that stretch reads MSRLALNRYSRCFSRLKTLTTPLFFSSSAA. One can recognise an SET domain in the interval 42 to 295; that stretch reads PPIRVGLTES…EGEELRICYI (254 aa).

The protein belongs to the class V-like SAM-binding methyltransferase superfamily. Histone-lysine methyltransferase family. TRX/MLL subfamily.

It localises to the nucleus. It carries out the reaction L-lysyl-[histone] + S-adenosyl-L-methionine = N(6)-methyl-L-lysyl-[histone] + S-adenosyl-L-homocysteine + H(+). Functionally, histone methyltransferase. This Arabidopsis thaliana (Mouse-ear cress) protein is Histone-lysine N-methyltransferase ATXR4 (ATXR4).